The chain runs to 176 residues: Ribosome maturation factor RimM (176 aa).

The 76-residue stretch at 99–174 (KNEFYITDLI…IVLIQPEIWN (76 aa)) folds into the PRC barrel domain.

This sequence belongs to the RimM family. Binds ribosomal protein uS19.

It localises to the cytoplasm. An accessory protein needed during the final step in the assembly of 30S ribosomal subunit, possibly for assembly of the head region. Essential for efficient processing of 16S rRNA. May be needed both before and after RbfA during the maturation of 16S rRNA. It has affinity for free ribosomal 30S subunits but not for 70S ribosomes. The protein is Ribosome maturation factor RimM of Leptospira interrogans serogroup Icterohaemorrhagiae serovar copenhageni (strain Fiocruz L1-130).